The sequence spans 139 residues: UPF0216 protein MJ1224 (139 aa).

The protein belongs to the UPF0216 family.

The polypeptide is UPF0216 protein MJ1224 (Methanocaldococcus jannaschii (strain ATCC 43067 / DSM 2661 / JAL-1 / JCM 10045 / NBRC 100440) (Methanococcus jannaschii)).